Reading from the N-terminus, the 94-residue chain is Potassium channel protein kcv (94 aa).

A helical transmembrane segment spans residues 14–34 (FMIHLFILAMFVMIYKFFPGG). Asparagine 38 carries an N-linked (GlcNAc...) asparagine; by host glycan. Residues 74-94 (TGAKLCTIAHIVTVFFIVLTL) traverse the membrane as a helical segment.

Belongs to the two pore domain potassium channel (TC 1.A.1.12) family.

It localises to the membrane. In terms of biological role, potassium-selective channel essential in the virus replication cycle. May be involved in preventing multiple infections (Potential). The polypeptide is Potassium channel protein kcv (A250R) (Paramecium bursaria Chlorella virus 1 (PBCV-1)).